The primary structure comprises 1081 residues: SPX and EXS domain-containing protein 4 (1081 aa).

Positions 1–483 constitute an SPX domain; it reads MKFRDLLNDH…RIISSECRKY (483 aa). 3 disordered regions span residues 86–118, 160–271, and 318–354; these read ETADSPAIPSPIISHSNINSNNNNNGGTNSVGF, QRNN…HDKN, and VKGDKSNDKNNDKSNDKNNNKNNKNNNNNNNLNDEDN. 3 stretches are compositionally biased toward low complexity: residues 90-110, 161-196, and 211-228; these read SPAIPSPIISHSNINSNNNNN, RNNNNNINNINNNNNNNSNNSNNSNNNKTIKNTRNI, and SPFSSPSIGSPPMSSPSP. Positions 244-264 are enriched in acidic residues; sequence KDEDEEEEGEEEEDIEMEQLE. Positions 319 to 336 are enriched in basic and acidic residues; it reads KGDKSNDKNNDKSNDKNN. Over residues 337-349 the composition is skewed to low complexity; that stretch reads NKNNKNNNNNNNL. The next 9 helical transmembrane spans lie at 536-556, 573-593, 622-642, 654-674, 703-723, 776-796, 803-823, 854-874, and 887-907; these read NLFTIGLLIGVCIVLGIQVVF, LAWLLFRISLLPILLGTMFSL, YLKYGLIFNTLWLLALNLYID, ILIPIVFVLITLIIGIQPFPI, FFMSVQLLSLGEFLFNIQSMV, ITSAIRSIFSIIALVLNYIAL, WSIIKIAWFGINVVGSFYKFY, WIYYVAITLDFFLRFTWLIIF, and PLFLFFFSLTEVVWATQFIFF. The 203-residue stretch at 738 to 940 folds into the EXS domain; it reads FCSQSRFFAL…SQEYNNYMDE (203 aa). The tract at residues 939-1031 is disordered; sequence DEKKKRRKRK…INDHMNPDTG (93 aa). Residues 942-951 are compositionally biased toward basic residues; sequence KKRRKRKQKQ. Residues 952–970 are compositionally biased toward low complexity; that stretch reads SKSNNNNNNNNNNNNNNNN. Residues 977 to 1003 show a composition bias toward polar residues; that stretch reads SSNNVETDETITSSNNTDSSHQKQPLT. Basic and acidic residues predominate over residues 1013–1022; it reads NHQDHHDLSI.

It belongs to the SYG1 (TC 2.A.94) family.

The protein localises to the membrane. This chain is SPX and EXS domain-containing protein 4, found in Dictyostelium discoideum (Social amoeba).